Here is a 379-residue protein sequence, read N- to C-terminus: Protein FAM53B (379 aa).

2 disordered regions span residues 206-257 (CPAE…HKQR) and 302-348 (AQND…AGKE). The span at 212–236 (SPESTPELQRRSGQSGLARSRSQPC) shows a compositional bias: polar residues. Basic residues predominate over residues 239 to 249 (NHQKIGVKRRR). The Nuclear localization signal motif lies at 246 to 249 (KRRR). Residues 326-342 (QSDSSSADALIHQSESS) show a composition bias toward polar residues.

This sequence belongs to the FAM53 family. In terms of assembly, interacts with ctnnb1. Mainly expressed in proliferating tissues.

Its subcellular location is the nucleus. Acts as a regulator of Wnt signaling pathway by regulating beta-catenin (ctnnb1) nuclear localization. Required for appendage regeneration by regulating cell proliferation. The chain is Protein FAM53B from Danio rerio (Zebrafish).